The chain runs to 160 residues: Transcription antitermination protein NusB (160 aa).

Belongs to the NusB family.

In terms of biological role, involved in transcription antitermination. Required for transcription of ribosomal RNA (rRNA) genes. Binds specifically to the boxA antiterminator sequence of the ribosomal RNA (rrn) operons. The polypeptide is Transcription antitermination protein NusB (Nitrobacter hamburgensis (strain DSM 10229 / NCIMB 13809 / X14)).